Here is a 540-residue protein sequence, read N- to C-terminus: MAKEIKFSEETRRALEAGVNKLADTVKVTLGPKGRNVILDKKFGSPLITNDGVTIAKEIELEDRFENMGAQLVKEVATKTNDVAGDGTTTATVLAQAIIREGLKNVTAGANPILLRKGIQKAVTVAVEELKNQSRIVETQEAISQVASISAGDEEVGKLIAEAMEIVGKDGVITVEESQTMNTELDAVEGMQFDRGFVSAYMVTDVDKMEAVLNDPYILITDKKISNIQELLPVLEQIVQQGKKLLIIAEDVEGEALSTLVVNKLRGTFDVVAVKAPGFGDRRKEMLQDIAILTGAQVISEELGYDLKEADLSMLGRASSVKVTKESTTIVDGSGDKKAIEDRVTQIKHQVEQTTSDFDREKLMERLAKLAGGVAVVKVGAATEVELKERKLRIEDALNATRAAVEEGIVAGGGTAFVSVIPAIGTLIESLEGEVKLGAQIVKKALEEPLRQIAINAGLEGAVIVQNVVNSEAETGFDALNEKYVNMIEAGIVDPTKVSRSALQNAASIASTFLTTEAAVADLPEKEDAGMPGTGMDGMY.

ATP is bound by residues 29–32 (TLGP), 86–90 (DGTTT), Gly-413, 478–480 (DAL), and Asp-494.

Belongs to the chaperonin (HSP60) family. Forms a cylinder of 14 subunits composed of two heptameric rings stacked back-to-back. Interacts with the co-chaperonin GroES.

The protein localises to the cytoplasm. The enzyme catalyses ATP + H2O + a folded polypeptide = ADP + phosphate + an unfolded polypeptide.. Functionally, together with its co-chaperonin GroES, plays an essential role in assisting protein folding. The GroEL-GroES system forms a nano-cage that allows encapsulation of the non-native substrate proteins and provides a physical environment optimized to promote and accelerate protein folding. This Clostridioides difficile (Peptoclostridium difficile) protein is Chaperonin GroEL.